The primary structure comprises 238 residues: SPbeta prophage-derived uncharacterized protein YorM (238 aa).

The first 37 residues, 1 to 37 (MFKKLIDKHKKYVYHRINKMALFATIGLLGVGLVYSA), serve as a signal peptide directing secretion. Residues 111 to 121 (TKTKKVQKTNT) are compositionally biased toward basic residues. A disordered region spans residues 111-132 (TKTKKVQKTNTKRNLDKAVSKS).

The polypeptide is SPbeta prophage-derived uncharacterized protein YorM (yorM) (Bacillus subtilis (strain 168)).